Reading from the N-terminus, the 472-residue chain is Aspartyl/glutamyl-tRNA(Asn/Gln) amidotransferase subunit B (472 aa).

This sequence belongs to the GatB/GatE family. GatB subfamily. As to quaternary structure, heterotrimer of A, B and C subunits.

The catalysed reaction is L-glutamyl-tRNA(Gln) + L-glutamine + ATP + H2O = L-glutaminyl-tRNA(Gln) + L-glutamate + ADP + phosphate + H(+). The enzyme catalyses L-aspartyl-tRNA(Asn) + L-glutamine + ATP + H2O = L-asparaginyl-tRNA(Asn) + L-glutamate + ADP + phosphate + 2 H(+). In terms of biological role, allows the formation of correctly charged Asn-tRNA(Asn) or Gln-tRNA(Gln) through the transamidation of misacylated Asp-tRNA(Asn) or Glu-tRNA(Gln) in organisms which lack either or both of asparaginyl-tRNA or glutaminyl-tRNA synthetases. The reaction takes place in the presence of glutamine and ATP through an activated phospho-Asp-tRNA(Asn) or phospho-Glu-tRNA(Gln). This is Aspartyl/glutamyl-tRNA(Asn/Gln) amidotransferase subunit B from Campylobacter jejuni subsp. jejuni serotype O:6 (strain 81116 / NCTC 11828).